Here is a 308-residue protein sequence, read N- to C-terminus: ATP synthase gamma chain (308 aa).

Belongs to the ATPase gamma chain family. F-type ATPases have 2 components, CF(1) - the catalytic core - and CF(0) - the membrane proton channel. CF(1) has five subunits: alpha(3), beta(3), gamma(1), delta(1), epsilon(1). CF(0) has three main subunits: a, b and c.

It is found in the cell membrane. Functionally, produces ATP from ADP in the presence of a proton gradient across the membrane. The gamma chain is believed to be important in regulating ATPase activity and the flow of protons through the CF(0) complex. This Mycobacteroides abscessus (strain ATCC 19977 / DSM 44196 / CCUG 20993 / CIP 104536 / JCM 13569 / NCTC 13031 / TMC 1543 / L948) (Mycobacterium abscessus) protein is ATP synthase gamma chain.